Consider the following 1958-residue polypeptide: Sodium channel protein type 10 subunit alpha (1958 aa).

Topologically, residues 1 to 125 (MEFPFGSVGT…FNLIRRTAIK (125 aa)) are cytoplasmic. The tract at residues 27 to 54 (QIAAHRAAKKGRPKQRGQKDKSEKPRPQ) is disordered. Residues 32–42 (RAAKKGRPKQR) show a composition bias toward basic residues. The span at 43-54 (GQKDKSEKPRPQ) shows a compositional bias: basic and acidic residues. The I repeat unit spans residues 116-404 (FNLIRRTAIK…VTMAYEEQSQ (289 aa)). A helical transmembrane segment spans residues 126–149 (VSVHSWFSIFITVTILVNCVCMTR). Residues 150–154 (TDLPE) are Extracellular-facing. A helical membrane pass occupies residues 155–174 (KLEYAFTVVYTFEALIKILA). The Cytoplasmic portion of the chain corresponds to 175 to 187 (RGFCLNEFTYLRD). A helical membrane pass occupies residues 188–206 (PWNWLDFSVITLAYVGAAI). Residues 207 to 212 (DLRGIS) are Extracellular-facing. Residues 213–232 (GLRTFRVLRALKTVSVIPGL) traverse the membrane as a helical; Voltage-sensor segment. Residues 233-248 (KVIVGALIHSVRKLAD) lie on the Cytoplasmic side of the membrane. The chain crosses the membrane as a helical span at residues 249–272 (VTILTVFCLSVFALVGLQLFKGNL). The Extracellular segment spans residues 273–340 (KNKCIKNGTD…PDFNYTSFDS (68 aa)). The cysteines at positions 276 and 318 are disulfide-linked. 4 N-linked (GlcNAc...) asparagine glycosylation sites follow: asparagine 279, asparagine 288, asparagine 311, and asparagine 334. Positions 341–365 (FAWAFLSLFRLMTQDSWERLYQQTL) form an intramembrane region, pore-forming. Topologically, residues 366 to 372 (RASGKMY) are extracellular. The helical transmembrane segment at 373–398 (MVFFVLVIFLGSFYLVNLILAVVTMA) threads the bilayer. The Cytoplasmic segment spans residues 399–658 (YEEQSQATIA…KWKKFKMVLF (260 aa)). Serine 440, serine 443, serine 466, and serine 478 each carry phosphoserine. Disordered regions lie at residues 444–483 (HNGS…PYNQ) and 539–583 (GRGA…APEG). Positions 549 to 560 (PRSPLPQSPNPG) are enriched in pro residues. Phosphoserine occurs at positions 611 and 614. An II repeat occupies 646-910 (CCPKWKKFKM…EDDGEVNNLQ (265 aa)). The helical transmembrane segment at 659 to 683 (ELVTDPFAELTITLCIVVNTVFMAM) threads the bilayer. The Extracellular segment spans residues 684 to 694 (EHYPMTDAFDA). Residues 695–718 (MLQAGNIVFTVFFTMEMAFKIIAF) form a helical membrane-spanning segment. The Cytoplasmic portion of the chain corresponds to 719–726 (DPYYYFQK). The chain crosses the membrane as a helical span at residues 727–746 (KWNIFDCVIVTVSLLELSTS). Topologically, residues 747-752 (KKGSLS) are extracellular. The helical; Voltage-sensor transmembrane segment at 753 to 772 (VLRTFRLLRVFKLAKSWPTL) threads the bilayer. Residues 773–788 (NMLIKIIGNSVGALGN) lie on the Cytoplasmic side of the membrane. The helical transmembrane segment at 789 to 809 (LTFILAIIVFIFALVGKQLLS) threads the bilayer. The Extracellular segment spans residues 810–833 (ENYGCRRDGISVWNGERLRWHMCD). The segment at residues 834–854 (FFHSFLVVFRILCGEWIENMW) is an intramembrane region (pore-forming). Over 855 to 863 (VCMEVSQDY) the chain is Extracellular. Cysteine 856 and cysteine 865 are oxidised to a cystine. The helical transmembrane segment at 864–889 (ICLTLFLTVMVLGNLVVLNLFIALLL) threads the bilayer. Residues 890–1148 (NSFSADNLTA…GWQVRKTCYR (259 aa)) lie on the Cytoplasmic side of the membrane. Residues 1006 to 1094 (DLDELEEDVE…SEGSTVDCPD (89 aa)) are disordered. A compositionally biased stretch (polar residues) spans 1017–1038 (ASQSSWQEESPKGQQELLQQVQ). Residues 1141–1450 (QVRKTCYRIV…KKYYNAMKKL (310 aa)) form an III repeat. The chain crosses the membrane as a helical span at residues 1149-1172 (IVEHSWFESFIIFMILLSSGALAF). Topologically, residues 1173-1185 (EDNYLEEKPRVKS) are extracellular. The helical transmembrane segment at 1186–1211 (VLEYTDRVFTFIFVFEMLLKWVAYGF) threads the bilayer. At 1212–1217 (KKYFTN) the chain is on the cytoplasmic side. Residues 1218–1239 (AWCWLDFLIVNISLTSLIAKIL) form a helical membrane-spanning segment. The Extracellular portion of the chain corresponds to 1240–1243 (EYSD). A helical; Voltage-sensor membrane pass occupies residues 1244–1265 (VASIKALRTLRALRPLRALSRF). The Cytoplasmic portion of the chain corresponds to 1266-1284 (EGMRVVVDALVGAIPSIMN). Residues 1285–1312 (VLLVCLIFWLIFSIMGVNLFAGKFSRCV) traverse the membrane as a helical segment. Residues 1313–1354 (DTRSNPFSVVNSTFVTNKSDCYNQNNTGHFFWVNVKVNFDNV) are Extracellular-facing. Asparagine 1323, asparagine 1329, and asparagine 1337 each carry an N-linked (GlcNAc...) asparagine glycan. Residues 1355–1376 (AMGYLALLQVATFKGWMDIMYA) constitute an intramembrane region (pore-forming). Residues 1377-1392 (AVDSRDINSQPNWEES) lie on the Extracellular side of the membrane. Residues 1393 to 1419 (LYMYLYFVVFIIFGGFFTLNLFVGVII) traverse the membrane as a helical segment. Over 1420 to 1472 (DNFNQQKKKLGGQDIFMTEEQKKYYNAMKKLGSKKPQKPIPRPLNKYQGFVFD) the chain is Cytoplasmic. Position 1452 is a phosphoserine; by PKC (serine 1452). One copy of the IV repeat lies at 1459-1758 (IPRPLNKYQG…WEKFDPEATQ (300 aa)). A helical transmembrane segment spans residues 1473–1496 (IVTRQAFDIIIMALICLNMITMMV). Residues 1497–1507 (ETDNQSEEKTK) are Extracellular-facing. Asparagine 1500 carries an N-linked (GlcNAc...) asparagine glycan. A helical membrane pass occupies residues 1508–1531 (VLGRINQFFVAVFTGECVMKMFAL). The Cytoplasmic segment spans residues 1532-1537 (RQYYFT). The chain crosses the membrane as a helical span at residues 1538–1561 (NGWNVFDFIVVILSISSLLFSAIL). The Extracellular portion of the chain corresponds to 1562–1573 (SSLESYFSPTLL). The helical; Voltage-sensor transmembrane segment at 1574–1595 (RVIRLARIGRILRLIRAAKGIR) threads the bilayer. Residues 1596 to 1610 (TLLFALMMSLPALFN) are Cytoplasmic-facing. Residues 1611–1633 (IGLLLFLVMFIYSIFGMASFANV) form a helical membrane-spanning segment. The Extracellular portion of the chain corresponds to 1634-1647 (IDEAGIDDMFNFKT). The pore-forming intramembrane region spans 1648 to 1670 (FGNSMLCLFQITTSAGWDGLLSP). Residues 1671–1698 (ILNTGPPYCDPNRPNSNGSKGNCGSPAV) are Extracellular-facing. Asparagine 1687 carries N-linked (GlcNAc...) asparagine glycosylation. The helical transmembrane segment at 1699 to 1723 (GILFFTTYIIISFLIVVNMYIAVIL) threads the bilayer. Over 1724–1958 (ENFNVATEES…AKEGKSPGPQ (235 aa)) the chain is Cytoplasmic. The IQ domain occupies 1852 to 1881 (EDISATIIQKAYRNYMLQRSLMLSNPLHVP). Residues 1901 to 1958 (NDNGGLPDKSETASATSFPPSYDSVTRGLSDRANISTSSSMQNEDEVTAKEGKSPGPQ) are disordered. Residues 1933 to 1942 (ANISTSSSMQ) show a composition bias toward polar residues. The span at 1947 to 1958 (VTAKEGKSPGPQ) shows a compositional bias: basic and acidic residues.

Belongs to the sodium channel (TC 1.A.1.10) family. Nav1.8/SCN10A subfamily. The channel consists of an ion conducting pore forming alpha-subunit regulated by one or more associated auxiliary subunits SCN1B, SCN2B and SCN3B; electrophysiological properties may vary depending on the type of the associated beta subunits. Found in a number of complexes with PRX, DYNLT1 and PDZD2. Interacts with proteins such as FSTL1, PRX, DYNLT1, PDZD2, S100A10 and many others. Interacts with NEDD4 and NEDD4L. In terms of processing, ubiquitinated by NEDD4L; which promotes its endocytosis. Post-translationally, phosphorylation at Ser-1452 by PKC in a highly conserved cytoplasmic loop slows inactivation of the sodium channel and reduces peak sodium currents. Lacks the cysteine which covalently binds the conotoxin GVIIJ. This cysteine (position 815) is speculated in other sodium channel subunits alpha to be implied in covalent binding with the sodium channel subunit beta-2 or beta-4. As to expression, expressed in dorsal root ganglion and trigeminal ganglion.

Its subcellular location is the cell membrane. It catalyses the reaction Na(+)(in) = Na(+)(out). Functionally, tetrodotoxin-resistant channel that mediates the voltage-dependent sodium ion permeability of excitable membranes. Assuming opened or closed conformations in response to the voltage difference across the membrane, the protein forms a sodium-selective channel through which sodium ions may pass in accordance with their electrochemical gradient. Plays a role in neuropathic pain mechanisms. The polypeptide is Sodium channel protein type 10 subunit alpha (Mus musculus (Mouse)).